Reading from the N-terminus, the 404-residue chain is Tryptophan synthase beta chain (404 aa).

Lysine 98 carries the N6-(pyridoxal phosphate)lysine modification.

It belongs to the TrpB family. Tetramer of two alpha and two beta chains. It depends on pyridoxal 5'-phosphate as a cofactor.

The enzyme catalyses (1S,2R)-1-C-(indol-3-yl)glycerol 3-phosphate + L-serine = D-glyceraldehyde 3-phosphate + L-tryptophan + H2O. It participates in amino-acid biosynthesis; L-tryptophan biosynthesis; L-tryptophan from chorismate: step 5/5. Functionally, the beta subunit is responsible for the synthesis of L-tryptophan from indole and L-serine. The protein is Tryptophan synthase beta chain (trpB) of Methanocaldococcus jannaschii (strain ATCC 43067 / DSM 2661 / JAL-1 / JCM 10045 / NBRC 100440) (Methanococcus jannaschii).